Reading from the N-terminus, the 258-residue chain is UPF0246 protein LHK_02295 (258 aa).

It belongs to the UPF0246 family.

The sequence is that of UPF0246 protein LHK_02295 from Laribacter hongkongensis (strain HLHK9).